The following is a 226-amino-acid chain: Ribonuclease 3 (226 aa).

The RNase III domain maps to 5–127; it reads TFQRGDPIGH…IVAAIYLDCG (123 aa). Residue E40 coordinates Mg(2+). D44 is an active-site residue. 2 residues coordinate Mg(2+): D113 and E116. Residue E116 is part of the active site. Residues 154–224 form the DRBM domain; that stretch reads DPKTRLQEWL…ATLVIAQLDS (71 aa).

The protein belongs to the ribonuclease III family. As to quaternary structure, homodimer. Mg(2+) serves as cofactor.

The protein resides in the cytoplasm. It catalyses the reaction Endonucleolytic cleavage to 5'-phosphomonoester.. Functionally, digests double-stranded RNA. Involved in the processing of primary rRNA transcript to yield the immediate precursors to the large and small rRNAs (23S and 16S). Processes some mRNAs, and tRNAs when they are encoded in the rRNA operon. Processes pre-crRNA and tracrRNA of type II CRISPR loci if present in the organism. In Xanthomonas axonopodis pv. citri (strain 306), this protein is Ribonuclease 3.